The following is a 371-amino-acid chain: N-methyl-L-tryptophan oxidase (371 aa).

Residue D4–A34 participates in FAD binding. C307 is modified (S-8alpha-FAD cysteine).

Belongs to the MSOX/MTOX family. MTOX subfamily. In terms of assembly, monomer. FAD serves as cofactor.

The catalysed reaction is N(alpha)-methyl-L-tryptophan + O2 + H2O = L-tryptophan + formaldehyde + H2O2. Functionally, catalyzes the oxidative demethylation of N-methyl-L-tryptophan. The protein is N-methyl-L-tryptophan oxidase of Yersinia pseudotuberculosis serotype O:1b (strain IP 31758).